Reading from the N-terminus, the 230-residue chain is PKHD-type hydroxylase XF_0598 (230 aa).

The 105-residue stretch at 78–182 folds into the Fe2OG dioxygenase domain; the sequence is RTLPPRFNCY…RIASFFWVQS (105 aa). The Fe cation site is built by histidine 96, aspartate 98, and histidine 163. Residue arginine 173 coordinates 2-oxoglutarate.

It depends on Fe(2+) as a cofactor. L-ascorbate is required as a cofactor.

The polypeptide is PKHD-type hydroxylase XF_0598 (Xylella fastidiosa (strain 9a5c)).